Here is a 273-residue protein sequence, read N- to C-terminus: 4-hydroxy-tetrahydrodipicolinate reductase (273 aa).

NAD(+) contacts are provided by residues 12–17 and Glu38; that span reads GAGGRM. Arg39 serves as a coordination point for NADP(+). Residues 102–104 and 126–129 contribute to the NAD(+) site; these read GTT and AANF. Residue His159 is the Proton donor/acceptor of the active site. His160 lines the (S)-2,3,4,5-tetrahydrodipicolinate pocket. The active-site Proton donor is the Lys163. 169–170 contacts (S)-2,3,4,5-tetrahydrodipicolinate; that stretch reads GT.

The protein belongs to the DapB family. In terms of assembly, homotetramer.

The protein localises to the cytoplasm. The enzyme catalyses (S)-2,3,4,5-tetrahydrodipicolinate + NAD(+) + H2O = (2S,4S)-4-hydroxy-2,3,4,5-tetrahydrodipicolinate + NADH + H(+). It carries out the reaction (S)-2,3,4,5-tetrahydrodipicolinate + NADP(+) + H2O = (2S,4S)-4-hydroxy-2,3,4,5-tetrahydrodipicolinate + NADPH + H(+). Its pathway is amino-acid biosynthesis; L-lysine biosynthesis via DAP pathway; (S)-tetrahydrodipicolinate from L-aspartate: step 4/4. Catalyzes the conversion of 4-hydroxy-tetrahydrodipicolinate (HTPA) to tetrahydrodipicolinate. The sequence is that of 4-hydroxy-tetrahydrodipicolinate reductase from Salmonella enteritidis PT4 (strain P125109).